The sequence spans 810 residues: Transitional endoplasmic reticulum ATPase homolog 2 (810 aa).

Residues 252–258 (PGTGKTL), Asn-353, His-389, and 526–531 (GCGKTL) each bind ATP. Residues 713–727 (RQEKERQDRSARGEE) are compositionally biased toward basic and acidic residues. Disordered stretches follow at residues 713 to 732 (RQEK…MEDE) and 777 to 810 (FGNN…DLYN). The span at 793–802 (PVGGNGGSGG) shows a compositional bias: gly residues. Residues 805 to 810 (DDDLYN) form an interaction with ufd-2 region.

The protein belongs to the AAA ATPase family. CDC48 subfamily. In terms of assembly, homohexamer; oligomerization is ATP-independent. Forms a ring-shaped particle of 18.3 nm diameter, that displays 6-fold radial symmetry. Interacts with cdc-48.1 and thus may form heterohexamers. Forms a complex composed of ubxn-3, cdc-48.1 and/or cdc-48.2 and substrate cdt-1. Interacts (via N-terminus) with ubxn-3. Interacts (via N-terminus) with atx-3 (via RRDR motif). Interacts (via N-terminus) with ubxn-5. Interacts with ufd-1. Interacts (via DDDLYN motif) with ufd-2. Interacts (via N-terminus) with ubxn-1. Interacts (via N-terminus) with ubxn-2. Interacts (via N-terminus) with ubxn-4. Interacts with ubxn-6. As to expression, expressed in body wall muscles.

It localises to the cytoplasm. It carries out the reaction ATP + H2O = ADP + phosphate + H(+). Its activity is regulated as follows. The first ATP-binding region has low ATPase activity. The second ATP-binding region is responsible for ATPase activity. ATP binding to the first ATP-binding region induces intrinsic activity of the second ATP-binding region. While ATP binding to the first ATP-binding region appears to prevent ATP hydrolysis by the second ATP-binding region, ADP-binding to first region promotes the coordinate and cooperative ATPase cycle of the second ATP-binding region. ATP binding to the first ATP-binding region induces a conformational change, promoting the rotation of the first ATP-binding region relative to the second ATP-binding region in the hexamer. Inhibited by N-ethylmaleimide (NEM). ATP-dependent chaperone which probably uses the energy provided by ATP hydrolysis to generate mechanical force to unfold substrate proteins, disassemble protein complexes, and disaggregate protein aggregates. However, able to prevent aggregation of unfolded proteins also in an ATP-independent manner. Targets polyubiquitinated proteins for proteasomal degradation by binding to 'Lys-48'-linked polyubiquitin chains. Involved in the cytoplasmic elimination of misfolded proteins exported from the ER. This pathway, known as ERAD, prevents the activation of the unfolded protein response (UPR) caused by the accumulation of misfolded proteins in the ER. Together with udf-2 and chn-1, regulates myosin assembly in body wall muscles by targeting myosin chaperone unc-45 for proteasomal degradation. During oocyte meiosis and together with cdc-48.1, required for chromosome condensation at the diakinesis phase in prophase I and for progression of metaphase I. During the first embryonic cell division, regulates DNA replication and thus chromosome segregation and decondensation, and nuclear envelope re-assembly. In S phase and in association with ufd-1, npl-4.1 and/or npl-4.2 and ubxn-3, ensures the degradation of DNA licensing factor cdt-1 after the initiation of DNA replication and thus the disassembly of the DNA replication CMG helicase complex by promoting the dissociation from chromatin of several of its components including cdc-45 and sld-5. Regulates ubxn-3 nuclear localization during S phase. During the first embryonic cell divisions and together with cdc-48.1, regulates the re-assembly of the nuclear envelope after mitosis possibly by inactivating kinase air-2, a component of the chromosomal passenger complex (CPC). This Caenorhabditis elegans protein is Transitional endoplasmic reticulum ATPase homolog 2 (cdc-48.2).